A 42-amino-acid chain; its full sequence is Beta-2-microglobulin (42 aa).

Residues 5 to 42 (PKIQVYSRHPAZBGKPBFLBCYVSGFHPXZIZIBLLKB) form the Ig-like C1-type domain.

Heterodimer of an alpha chain and a beta chain. Beta-2-microglobulin is the beta-chain of major histocompatibility complex class I molecules.

Its subcellular location is the secreted. In terms of biological role, component of the class I major histocompatibility complex (MHC). Involved in the presentation of peptide antigens to the immune system. The polypeptide is Beta-2-microglobulin (B2M) (Canis lupus familiaris (Dog)).